The sequence spans 279 residues: Large ribosomal subunit protein uL2 (279 aa).

Disordered stretches follow at residues 1–59 (MGIR…GGHK) and 224–279 (VAMN…KNKR). Positions 50–59 (TTRHKGGGHK) are enriched in basic residues. The span at 253–268 (REGRTRRPNKESDKLI) shows a compositional bias: basic and acidic residues. The span at 269–279 (VRRRRTGKNKR) shows a compositional bias: basic residues.

It belongs to the universal ribosomal protein uL2 family. In terms of assembly, part of the 50S ribosomal subunit. Forms a bridge to the 30S subunit in the 70S ribosome.

Its function is as follows. One of the primary rRNA binding proteins. Required for association of the 30S and 50S subunits to form the 70S ribosome, for tRNA binding and peptide bond formation. It has been suggested to have peptidyltransferase activity; this is somewhat controversial. Makes several contacts with the 16S rRNA in the 70S ribosome. The protein is Large ribosomal subunit protein uL2 of Pseudarthrobacter chlorophenolicus (strain ATCC 700700 / DSM 12829 / CIP 107037 / JCM 12360 / KCTC 9906 / NCIMB 13794 / A6) (Arthrobacter chlorophenolicus).